Reading from the N-terminus, the 382-residue chain is Carbamoyl phosphate synthase small chain (382 aa).

The segment at 1 to 187 (MPTPALLVLA…EFRPQTATEE (187 aa)) is CPSase. 3 residues coordinate L-glutamine: serine 47, glycine 239, and glycine 241. The Glutamine amidotransferase type-1 domain maps to 191 to 377 (TVVAIDFGVK…VAQMRAYRQQ (187 aa)). Cysteine 267 (nucleophile) is an active-site residue. L-glutamine-binding residues include leucine 268, glutamine 271, asparagine 307, glycine 309, and phenylalanine 310. Residues histidine 350 and glutamate 352 contribute to the active site.

This sequence belongs to the CarA family. In terms of assembly, composed of two chains; the small (or glutamine) chain promotes the hydrolysis of glutamine to ammonia, which is used by the large (or ammonia) chain to synthesize carbamoyl phosphate. Tetramer of heterodimers (alpha,beta)4.

The catalysed reaction is hydrogencarbonate + L-glutamine + 2 ATP + H2O = carbamoyl phosphate + L-glutamate + 2 ADP + phosphate + 2 H(+). The enzyme catalyses L-glutamine + H2O = L-glutamate + NH4(+). Its pathway is amino-acid biosynthesis; L-arginine biosynthesis; carbamoyl phosphate from bicarbonate: step 1/1. It functions in the pathway pyrimidine metabolism; UMP biosynthesis via de novo pathway; (S)-dihydroorotate from bicarbonate: step 1/3. Its function is as follows. Small subunit of the glutamine-dependent carbamoyl phosphate synthetase (CPSase). CPSase catalyzes the formation of carbamoyl phosphate from the ammonia moiety of glutamine, carbonate, and phosphate donated by ATP, constituting the first step of 2 biosynthetic pathways, one leading to arginine and/or urea and the other to pyrimidine nucleotides. The small subunit (glutamine amidotransferase) binds and cleaves glutamine to supply the large subunit with the substrate ammonia. This chain is Carbamoyl phosphate synthase small chain, found in Thermosynechococcus vestitus (strain NIES-2133 / IAM M-273 / BP-1).